A 212-amino-acid polypeptide reads, in one-letter code: uncharacterized protein (212 aa).

Residues M1–S88 are disordered. S13 is subject to Phosphoserine. Residues A23–T41 are compositionally biased toward pro residues. Residues V45 to I54 show a composition bias toward basic and acidic residues.

This sequence belongs to the remorin family.

Its subcellular location is the cell membrane. This is an uncharacterized protein from Arabidopsis thaliana (Mouse-ear cress).